Reading from the N-terminus, the 492-residue chain is Bifunctional protein GlmU (492 aa).

A pyrophosphorylase region spans residues 1-241 (MTFRGDTAVV…SALVAGVNDR (241 aa)). UDP-N-acetyl-alpha-D-glucosamine is bound by residues 12–15 (LAAG), Lys26, Gln83, and 88–89 (GT). A Mg(2+)-binding site is contributed by Asp114. UDP-N-acetyl-alpha-D-glucosamine contacts are provided by Gly151, Glu166, Asn181, and Asn239. Mg(2+) is bound at residue Asn239. The tract at residues 242 to 262 (VQLAQLGAELNRRIVAAHQMA) is linker. The tract at residues 263-492 (GVTVIDPATT…TPPPDADQTP (230 aa)) is N-acetyltransferase. Residues Arg344 and Lys362 each coordinate UDP-N-acetyl-alpha-D-glucosamine. His374 serves as the catalytic Proton acceptor. UDP-N-acetyl-alpha-D-glucosamine contacts are provided by Tyr377 and Asn388. Acetyl-CoA is bound by residues Ala391, 397–398 (NY), and Ala434. The disordered stretch occupies residues 451–492 (GGPQRNIEDWVQQKRPGTPSAEAARKASAEQSTPPPDADQTP). Pro residues predominate over residues 483–492 (TPPPDADQTP).

In the N-terminal section; belongs to the N-acetylglucosamine-1-phosphate uridyltransferase family. This sequence in the C-terminal section; belongs to the transferase hexapeptide repeat family. In terms of assembly, homotrimer. Mg(2+) serves as cofactor.

The protein resides in the cytoplasm. The catalysed reaction is alpha-D-glucosamine 1-phosphate + acetyl-CoA = N-acetyl-alpha-D-glucosamine 1-phosphate + CoA + H(+). It catalyses the reaction N-acetyl-alpha-D-glucosamine 1-phosphate + UTP + H(+) = UDP-N-acetyl-alpha-D-glucosamine + diphosphate. It functions in the pathway nucleotide-sugar biosynthesis; UDP-N-acetyl-alpha-D-glucosamine biosynthesis; N-acetyl-alpha-D-glucosamine 1-phosphate from alpha-D-glucosamine 6-phosphate (route II): step 2/2. Its pathway is nucleotide-sugar biosynthesis; UDP-N-acetyl-alpha-D-glucosamine biosynthesis; UDP-N-acetyl-alpha-D-glucosamine from N-acetyl-alpha-D-glucosamine 1-phosphate: step 1/1. It participates in bacterial outer membrane biogenesis; LPS lipid A biosynthesis. In terms of biological role, catalyzes the last two sequential reactions in the de novo biosynthetic pathway for UDP-N-acetylglucosamine (UDP-GlcNAc). The C-terminal domain catalyzes the transfer of acetyl group from acetyl coenzyme A to glucosamine-1-phosphate (GlcN-1-P) to produce N-acetylglucosamine-1-phosphate (GlcNAc-1-P), which is converted into UDP-GlcNAc by the transfer of uridine 5-monophosphate (from uridine 5-triphosphate), a reaction catalyzed by the N-terminal domain. This Mycobacterium marinum (strain ATCC BAA-535 / M) protein is Bifunctional protein GlmU.